Reading from the N-terminus, the 603-residue chain is NADPH-dependent diflavin oxidoreductase 1 (603 aa).

Residues Val-8–Tyr-152 enclose the Flavodoxin-like domain. FMN is bound by residues Ser-14 to Ala-19, Ser-61 to Gly-64, Leu-99 to Asn-108, and Glu-134. The 248-residue stretch at Pro-210–Gly-457 folds into the FAD-binding FR-type domain. FAD-binding positions include Arg-358, Arg-388–Ser-391, and Gly-429–Ser-432. NADP(+) contacts are provided by residues Thr-472, Ser-528 to Arg-529, and Lys-534 to Gln-538. Trp-603 serves as a coordination point for FAD.

This sequence belongs to the NADPH-dependent diflavin oxidoreductase NDOR1 family. The protein in the N-terminal section; belongs to the flavodoxin family. In the C-terminal section; belongs to the flavoprotein pyridine nucleotide cytochrome reductase family. As to quaternary structure, interacts with DRE2; as part of the cytosolic iron-sulfur (Fe-S) protein assembly (CIA) machinery. The cofactor is FAD. Requires FMN as cofactor.

The protein resides in the cytoplasm. It localises to the mitochondrion. The catalysed reaction is 2 oxidized [2Fe-2S]-[protein] + NADPH = 2 reduced [2Fe-2S]-[protein] + NADP(+) + H(+). In terms of biological role, NADPH-dependent reductase which is a central component of the cytosolic iron-sulfur (Fe-S) protein assembly (CIA) machinery. Transfers electrons from NADPH via its FAD and FMN prosthetic groups to the [2Fe-2S] cluster of DRE2, another key component of the CIA machinery. In turn, this reduced cluster provides electrons for assembly of cytosolic iron-sulfur cluster proteins. Positively controls H(2)O(2)-induced cell death. This is NADPH-dependent diflavin oxidoreductase 1 from Gibberella zeae (strain ATCC MYA-4620 / CBS 123657 / FGSC 9075 / NRRL 31084 / PH-1) (Wheat head blight fungus).